The primary structure comprises 428 residues: D-amino acid dehydrogenase (428 aa).

3–17 lines the FAD pocket; the sequence is VVILGSGVVGVASAY.

This sequence belongs to the DadA oxidoreductase family. The cofactor is FAD.

It carries out the reaction a D-alpha-amino acid + A + H2O = a 2-oxocarboxylate + AH2 + NH4(+). The protein operates within amino-acid degradation; D-alanine degradation; NH(3) and pyruvate from D-alanine: step 1/1. Functionally, oxidative deamination of D-amino acids. This Burkholderia vietnamiensis (strain G4 / LMG 22486) (Burkholderia cepacia (strain R1808)) protein is D-amino acid dehydrogenase.